Consider the following 307-residue polypeptide: MIKVVAVVGPTAVGKTALAIKLAQAFNGEIISGDSMQVYRHLDIGTAKATAAEQAQAPHHLIDIQDVDQQFTVAQFVAAAQPLIQAIHERGHLPIVAGGTGFYLQALFDGLKLGADAPGDPQIREHLRQIAVEQGPQVLWQQLAAQDPVAASKIPPTNIRRTVRALEVIQVTGQLFSHQQNAGSQYDEYYIGLNTARPLLYERINQRVDNMVQAGLLDEVRWLAKRGGATLPAASGIGYRELLPVLDQPEKLAAAIDQIKQDSRHYAKRQLTWFRHQTTANWYDLVQHPEVDAQILQDVTAWLTEKN.

9-16 provides a ligand contact to ATP; that stretch reads GPTAVGKT. Residue 11–16 participates in substrate binding; sequence TAVGKT. The interval 34-37 is interaction with substrate tRNA; the sequence is DSMQ.

The protein belongs to the IPP transferase family. As to quaternary structure, monomer. It depends on Mg(2+) as a cofactor.

The catalysed reaction is adenosine(37) in tRNA + dimethylallyl diphosphate = N(6)-dimethylallyladenosine(37) in tRNA + diphosphate. Catalyzes the transfer of a dimethylallyl group onto the adenine at position 37 in tRNAs that read codons beginning with uridine, leading to the formation of N6-(dimethylallyl)adenosine (i(6)A). The protein is tRNA dimethylallyltransferase of Levilactobacillus brevis (strain ATCC 367 / BCRC 12310 / CIP 105137 / JCM 1170 / LMG 11437 / NCIMB 947 / NCTC 947) (Lactobacillus brevis).